The following is a 224-amino-acid chain: Cysteine-rich hydrophobic domain-containing protein 1 (224 aa).

The interval 1–80 is disordered; sequence MSILLPNMAE…PPPRVVSEEH (80 aa). Acidic residues predominate over residues 13–25; sequence TISELEEEEEEEA. Residues 26–40 are compositionally biased toward low complexity; that stretch reads ATSSSSPSSSSSVSG. The span at 41–69 shows a compositional bias: acidic residues; that stretch reads PDDDEEDEEEEEEEEEEEEEEEEEEEEEA. Residues 42-70 are a coiled coil; that stretch reads DDDEEDEEEEEEEEEEEEEEEEEEEEEAP.

It belongs to the CHIC family. In terms of processing, palmitoylated. As to expression, equally expressed in various parts of the brain.

It is found in the cell membrane. It localises to the cytoplasmic vesicle. This Homo sapiens (Human) protein is Cysteine-rich hydrophobic domain-containing protein 1 (CHIC1).